The sequence spans 444 residues: MREIVHIQAGQCGNQIGAKFWEVISDEHGIDPTGTYHGDSDLQLERINVYYNEASGGKYVPRAILVDLEPGTMDSVRAGPFGTLFRPDNFIFGQSGAGNNWAKGHYTEGAELVDNVLDVVRKESESCDCLQGFQLTHSLGGGTGSGMGTLLISKIREEYPDRIMTTFSVVPSPKVSDTVVEPYNATLSVHQLVENTDETFCIDNEALYDICFRTLKLTTPTYGDLNHLVSATMSGVTTCLRFPGQLNADLRKLAVNMVPFPRLHFFMPGFAPLTSRGSQGYRALTVPELTQQMFDAKNMMAACDPRHGRYLTVAAIFRGRMSMKEVDEQMLNVQNKNNAYFVEWIPNNVKTAVCDIPPRGLKMSATFIGNSTAIQELFKRISEQFTAMFRRKAFLHWYTGEGMDEMEFTEAESNMNDLVSEYQQYQEATVEDEDFEEEGDYERE.

Residues glutamine 11, glutamate 69, serine 138, glycine 142, threonine 143, glycine 144, asparagine 204, and asparagine 226 each contribute to the GTP site. Glutamate 69 provides a ligand contact to Mg(2+).

This sequence belongs to the tubulin family. As to quaternary structure, dimer of alpha and beta chains. A typical microtubule is a hollow water-filled tube with an outer diameter of 25 nm and an inner diameter of 15 nM. Alpha-beta heterodimers associate head-to-tail to form protofilaments running lengthwise along the microtubule wall with the beta-tubulin subunit facing the microtubule plus end conferring a structural polarity. Microtubules usually have 13 protofilaments but different protofilament numbers can be found in some organisms and specialized cells. Requires Mg(2+) as cofactor.

Its subcellular location is the cytoplasm. The protein localises to the cytoskeleton. Tubulin is the major constituent of microtubules, a cylinder consisting of laterally associated linear protofilaments composed of alpha- and beta-tubulin heterodimers. Microtubules grow by the addition of GTP-tubulin dimers to the microtubule end, where a stabilizing cap forms. Below the cap, tubulin dimers are in GDP-bound state, owing to GTPase activity of alpha-tubulin. This Trichuris trichiura (Whipworm) protein is Tubulin beta chain.